Consider the following 2844-residue polypeptide: Sodium channel protein 60E (2844 aa).

At 1–121 (MSDDQATFND…WSPARRVCVY (121 aa)) the chain is on the cytoplasmic side. Residues 107 to 434 (FLFYPWSPAR…FDPSVLNVKK (328 aa)) form an I repeat. The helical transmembrane segment at 122–145 (IATNQFFDYCVMATILFNCIFLAM) threads the bilayer. Topologically, residues 146 to 151 (TETVEE) are extracellular. The chain crosses the membrane as a helical span at residues 152-172 (AEYIFLAIYSIEMVIKIIAKG). At 173 to 183 (FLLNKYTYLRN) the chain is on the cytoplasmic side. A helical membrane pass occupies residues 184–202 (PWNWLDFVVITSGYATIGM). Residues 203-208 (EVGNLA) lie on the Extracellular side of the membrane. Residues 209-228 (GLRTFRVLRALKTVSIMPGL) traverse the membrane as a helical; Voltage-sensor segment. The Cytoplasmic portion of the chain corresponds to 229-244 (KTIINALLHSFRQLAE). Residues 245-265 (VMTLTIFCLMVFALFALQVYM) form a helical membrane-spanning segment. Residues 266–340 (GELRNKCVRQ…PNHGYTNFDN (75 aa)) are Extracellular-facing. An intrachain disulfide couples Cys272 to Cys318. N-linked (GlcNAc...) asparagine glycans are attached at residues Asn282, Asn293, and Asn311. Positions 341–365 (FMWSMLTTFQLITLDYWENVYNMVL) form an intramembrane region, pore-forming. Over 366–374 (ATCGPMSVS) the chain is Extracellular. The chain crosses the membrane as a helical span at residues 375–395 (FFTVVVFFGSFYLINLMLAVV). The Cytoplasmic segment spans residues 396 to 687 (ALSYEEEAEI…QNCLYKVVRD (292 aa)). Positions 452–610 (ASYSKKKTRR…QDTTNDMGHV (159 aa)) are disordered. Residues 455-465 (SKKKTRRKKTK) show a composition bias toward basic residues. Over residues 469–479 (EGGTNGNGNGS) the composition is skewed to gly residues. Low complexity-rich tracts occupy residues 511–520 (QAQKQYQQME) and 577–586 (SSNSSGVNRE). Acidic residues predominate over residues 593–603 (GVVDDHEEQDT). Residues 668-1130 (CTDYESWLQF…ESIELLGQYN (463 aa)) form an II repeat. Residues 688–708 (PLFELAITLCIVLNTAFLAME) form a helical membrane-spanning segment. At 709-718 (HHGMSESFRN) the chain is on the extracellular side. The chain crosses the membrane as a helical span at residues 719–743 (ALDVGNKVFTSIFTFECIVKLMALS). The Cytoplasmic portion of the chain corresponds to 744–749 (KDFFLC). The chain crosses the membrane as a helical span at residues 750-769 (GWNIFDLLIVTASLLDIIFE). Topologically, residues 770–775 (LVDGLS) are extracellular. A helical; Voltage-sensor transmembrane segment spans residues 776 to 795 (VLRGLRLLRVLKLAQSWTTM). The Cytoplasmic segment spans residues 796-810 (KVLLSIIISTIGALG). The chain crosses the membrane as a helical span at residues 811–832 (NLTLILVIVIYIFAVIGMQLFS). Over 833-852 (KDYTPEKFDPDPVPRWNFND) the chain is Extracellular. Positions 853–873 (FFHSFMMIFRILCGEWIEPLW) form an intramembrane region, pore-forming. At 874–889 (DCMRAEEEQGASTCFA) the chain is on the extracellular side. A disulfide bridge links Cys875 with Cys887. A helical membrane pass occupies residues 890-910 (IFLPTLVMGNFMVLNLFLALL). Topologically, residues 911 to 1742 (LNSFNSEELK…SAKHWTRVRT (832 aa)) are cytoplasmic. Positions 1129 to 1157 (YNSTDTDPYANDQRSGCGSFNRGDSLQDN) are enriched in polar residues. Disordered regions lie at residues 1129–1166 (YNST…GSEE), 1185–1224 (YRKS…NSMS), 1268–1288 (ISNV…ENET), 1577–1630 (APTP…ADAS), and 1635–1654 (LAMA…ATQK). Residues 1191–1203 (RLSQSSGQSQRSL) show a composition bias toward low complexity. The segment covering 1204 to 1213 (LKSEEAEMRR) has biased composition (basic and acidic residues). 3 stretches are compositionally biased toward polar residues: residues 1277–1286 (PSSQMGQPEN), 1604–1618 (PQST…QSAR), and 1640–1654 (KTEQ…ATQK). An III repeat occupies 1723–2040 (PWFMSCMDTQ…QKHYYTAMKK (318 aa)). Residues 1743 to 1763 (AVLTVVDTPAFEWFVLVLIFA) form a helical membrane-spanning segment. The Extracellular portion of the chain corresponds to 1764–1789 (SSITLCFEDINLDKNKTLKRVLYWIN). N-linked (GlcNAc...) asparagine glycans are attached at residues Asn1778 and Asn1789. A helical transmembrane segment spans residues 1790-1810 (FSFCLIFVVEMILKWLALGFS). At 1811–1813 (KYF) the chain is on the cytoplasmic side. The helical transmembrane segment at 1814-1834 (TSFWTILDFIIVFVSVFSLLI) threads the bilayer. Topologically, residues 1835–1839 (EENEN) are extracellular. A helical; Voltage-sensor transmembrane segment spans residues 1840–1861 (LKVLRSLRTLRALRPLRAISRW). Residues 1862 to 1880 (QGMRIVVNALMYAIPSIFN) are Cytoplasmic-facing. A helical membrane pass occupies residues 1881–1902 (VLLVCLVFWLIFSIMGVQFFGG). Residues 1903 to 1943 (KFFKCVNEMGELLPITEVNDKWDCIEQNYTWINSKITFDHV) are Extracellular-facing. N-linked (GlcNAc...) asparagine glycosylation is present at Asn1930. The segment at residues 1944-1965 (GMGYLALLQVATFEGWMEVMAD) is an intramembrane region (pore-forming). At 1966–1981 (AVDARGVDLQPQREAN) the chain is on the extracellular side. The chain crosses the membrane as a helical span at residues 1982–2002 (LYAYIYFVIFIVCGSFFTLNL). The Cytoplasmic segment spans residues 2003–2069 (FIGVIIDNFN…MFYDLSNSRR (67 aa)). One copy of the IV repeat lies at 2050 to 2311 (IKRPINHFLA…NMYIAIILEN (262 aa)). Residues 2070-2090 (FEIAIFVLIFLNMLTMGIEHY) traverse the membrane as a helical segment. Residues 2091–2095 (DQPHA) lie on the Extracellular side of the membrane. Residues 2096–2116 (VFFILEVSNAFFTTVFGLEAI) form a helical membrane-spanning segment. Residues 2117 to 2132 (VKIVGLRYHYFTVPWN) lie on the Cytoplasmic side of the membrane. The chain crosses the membrane as a helical span at residues 2133 to 2153 (VFDFLLVLASIFGILMEDIMI). The Extracellular portion of the chain corresponds to 2154-2162 (DLPISPTLL). A helical; Voltage-sensor membrane pass occupies residues 2163–2184 (RVVRVFRIGRILRLIKAAKGIR). Over 2185-2199 (KLLFALVVSLPALFN) the chain is Cytoplasmic. The helical transmembrane segment at 2200–2220 (IGALLGLITFIYAILGMSLFG) threads the bilayer. Topologically, residues 2221-2236 (NVKLQGALDDMVNFQT) are extracellular. The segment at residues 2237–2259 (FGRSMQLLFRLMTSAGWNDVLES) is an intramembrane region (pore-forming). At 2260-2288 (LMIQPPDCDPFIHGHTNGNCGHPLLAITY) the chain is on the extracellular side. Residues 2289–2309 (FTSFIIISYMIVINMYIAIIL) form a helical membrane-spanning segment. Residues 2310–2844 (ENFNQAHQEE…QFESLPDRQR (535 aa)) are Cytoplasmic-facing. The IQ domain occupies 2441–2470 (QEKAAKTIQTGWKEYLRRKREKERSNSGDS). Disordered stretches follow at residues 2457–2479 (RRKR…SPGG), 2584–2668 (SLTS…LSAQ), 2780–2802 (DSPK…GAPI), and 2818–2844 (NPEK…DRQR). Positions 2467 to 2479 (SGDSATQTSSPGG) are enriched in polar residues. A compositionally biased stretch (low complexity) spans 2595–2632 (AMNNTTNTTSNSASTSGTASSTATAPATGCGPAATSAS). Positions 2647 to 2658 (SRKRASSFIRKK) are enriched in basic residues. Positions 2825–2836 (DQGNGQDETAQF) are enriched in polar residues.

This sequence belongs to the sodium channel (TC 1.A.1.10) family. NaCP60E subfamily. As to expression, in embryonic and larval stages, expression is limited to very few non-neuronal cells in either the CNS or PNS. In pupal and adult stages, expressed in cell bodies of the fly central nervous system, including optic lobes, central brain, subesophageal ganglion, thoracico-abdominal ganglion, major olfactory organs, the third antennal segment and the maxillary palps.

It localises to the cell membrane. Functionally, mediates the voltage-dependent sodium ion permeability of excitable membranes. Plays a role in processing of olfactory information during the olfactory avoidance response. The sequence is that of Sodium channel protein 60E (NaCP60E) from Drosophila melanogaster (Fruit fly).